Consider the following 441-residue polypeptide: Serine/threonine-protein phosphatase 4 regulatory subunit 2 (441 aa).

A compositionally biased stretch (acidic residues) spans 201 to 213 (DEEEGFFDGDEDR). Disordered regions lie at residues 201–220 (DEEE…NKSK), 242–348 (INDD…LTTP), and 364–418 (SPSS…SQED). Polar residues predominate over residues 249–261 (NKGQNCQSDVTKN). The segment covering 264–302 (DDEDDDDNDDDYREDGADEDDEDDDHMGSTDDDEDDDED) has biased composition (acidic residues). Thr-347 bears the Phosphothreonine mark. Basic and acidic residues predominate over residues 388–398 (EDAHENHEGRS).

It belongs to the PPP4R2 family. As to quaternary structure, regulatory subunit (R2) of the histone H2A phosphatase complex (HTP-C) consisting of PPH3, PSY2 and PSY4. Interacts with SPT4 and SPT5.

The protein localises to the nucleus. In terms of biological role, regulatory subunit of the histone H2A phosphatase complex, which dephosphorylates H2AS128ph (gamma-H2A) that has been displaced from sites of DNA lesions in the double-stranded DNA break repair process. Dephosphorylation is necessary for efficient recovery from the DNA damage checkpoint. The sequence is that of Serine/threonine-protein phosphatase 4 regulatory subunit 2 (PSY4) from Saccharomyces cerevisiae (strain ATCC 204508 / S288c) (Baker's yeast).